A 193-amino-acid chain; its full sequence is Potassium-transporting ATPase KdpC subunit (193 aa).

The helical transmembrane segment at 9-29 (VLMTVVTTVLLGLVYPLLITG) threads the bilayer.

Belongs to the KdpC family. In terms of assembly, the system is composed of three essential subunits: KdpA, KdpB and KdpC.

The protein resides in the cell inner membrane. Part of the high-affinity ATP-driven potassium transport (or Kdp) system, which catalyzes the hydrolysis of ATP coupled with the electrogenic transport of potassium into the cytoplasm. This subunit acts as a catalytic chaperone that increases the ATP-binding affinity of the ATP-hydrolyzing subunit KdpB by the formation of a transient KdpB/KdpC/ATP ternary complex. The polypeptide is Potassium-transporting ATPase KdpC subunit (Koribacter versatilis (strain Ellin345)).